A 327-amino-acid chain; its full sequence is Ornithine carbamoyltransferase (327 aa).

Residues 56 to 59 (STRT), Gln83, Arg107, and 134 to 137 (HPTQ) contribute to the carbamoyl phosphate site. L-ornithine contacts are provided by residues Asn166, Asp230, and 234 to 235 (SM). Carbamoyl phosphate contacts are provided by residues 269–270 (CL) and Arg314.

It belongs to the aspartate/ornithine carbamoyltransferase superfamily. OTCase family.

The protein resides in the cytoplasm. The enzyme catalyses carbamoyl phosphate + L-ornithine = L-citrulline + phosphate + H(+). The protein operates within amino-acid degradation; L-arginine degradation via ADI pathway; carbamoyl phosphate from L-arginine: step 2/2. Reversibly catalyzes the transfer of the carbamoyl group from carbamoyl phosphate (CP) to the N(epsilon) atom of ornithine (ORN) to produce L-citrulline. This is Ornithine carbamoyltransferase from Borreliella burgdorferi (strain ZS7) (Borrelia burgdorferi).